Consider the following 349-residue polypeptide: Hydroxymethylglutaryl-CoA synthase (349 aa).

2 residues coordinate (3S)-3-hydroxy-3-methylglutaryl-CoA: Asp-29 and Ala-30. The active-site Proton donor/acceptor is the Glu-81. Residues Cys-113, Thr-154, Thr-202, and His-235 each coordinate (3S)-3-hydroxy-3-methylglutaryl-CoA. The Acyl-thioester intermediate role is filled by Cys-113. His-235 (proton donor/acceptor) is an active-site residue. Arg-240 contributes to the CoA binding site. (3S)-3-hydroxy-3-methylglutaryl-CoA is bound by residues Arg-244, Asn-267, and Ser-297.

The protein belongs to the thiolase-like superfamily. Archaeal HMG-CoA synthase family. In terms of assembly, interacts with acetoacetyl-CoA thiolase that catalyzes the precedent step in the pathway and with a DUF35 protein. The acetoacetyl-CoA thiolase/HMG-CoA synthase complex channels the intermediate via a fused CoA-binding site, which allows for efficient coupling of the endergonic thiolase reaction with the exergonic HMGCS reaction.

The catalysed reaction is acetoacetyl-CoA + acetyl-CoA + H2O = (3S)-3-hydroxy-3-methylglutaryl-CoA + CoA + H(+). Its pathway is metabolic intermediate biosynthesis; (R)-mevalonate biosynthesis; (R)-mevalonate from acetyl-CoA: step 2/3. In terms of biological role, catalyzes the condensation of acetyl-CoA with acetoacetyl-CoA to form 3-hydroxy-3-methylglutaryl-CoA (HMG-CoA). Functions in the mevalonate (MVA) pathway leading to isopentenyl diphosphate (IPP), a key precursor for the biosynthesis of isoprenoid compounds that are building blocks of archaeal membrane lipids. This chain is Hydroxymethylglutaryl-CoA synthase, found in Caldivirga maquilingensis (strain ATCC 700844 / DSM 13496 / JCM 10307 / IC-167).